We begin with the raw amino-acid sequence, 324 residues long: Myb-like DNA-binding protein myb-1 (324 aa).

HTH myb-type domains are found at residues 4–59 (MPDQ…KPGL) and 60–110 (NHGP…NRKK). The disordered stretch occupies residues 107–231 (NRKKNQLRRQ…PTGSTLRLLT (125 aa)). Over residues 155 to 165 (RRPSSPSSFND) the composition is skewed to polar residues. Residues 166 to 175 (SLHHRVHESI) are compositionally biased toward basic and acidic residues. Composition is skewed to low complexity over residues 183–192 (QQQQQQQQQQ) and 222–231 (PTGSTLRLLT).

The protein localises to the nucleus. This is Myb-like DNA-binding protein myb-1 (rca-1) from Neurospora crassa (strain ATCC 24698 / 74-OR23-1A / CBS 708.71 / DSM 1257 / FGSC 987).